The sequence spans 72 residues: Translation initiation factor IF-1 (72 aa).

An S1-like domain is found at 1–72 (MSKQDVIEFD…TKGRITYRGK (72 aa)).

The protein belongs to the IF-1 family. In terms of assembly, component of the 30S ribosomal translation pre-initiation complex which assembles on the 30S ribosome in the order IF-2 and IF-3, IF-1 and N-formylmethionyl-tRNA(fMet); mRNA recruitment can occur at any time during PIC assembly.

It is found in the cytoplasm. Functionally, one of the essential components for the initiation of protein synthesis. Stabilizes the binding of IF-2 and IF-3 on the 30S subunit to which N-formylmethionyl-tRNA(fMet) subsequently binds. Helps modulate mRNA selection, yielding the 30S pre-initiation complex (PIC). Upon addition of the 50S ribosomal subunit IF-1, IF-2 and IF-3 are released leaving the mature 70S translation initiation complex. This Hydrogenovibrio crunogenus (strain DSM 25203 / XCL-2) (Thiomicrospira crunogena) protein is Translation initiation factor IF-1.